A 454-amino-acid polypeptide reads, in one-letter code: Bifunctional protein GlmU (454 aa).

Residues 1–226 (MALNVVILAA…AVEVEGANNR (226 aa)) form a pyrophosphorylase region. UDP-N-acetyl-alpha-D-glucosamine-binding positions include 8–11 (LAAG), K22, Q73, 78–79 (GT), 100–102 (YGD), G137, E151, N166, and N224. Position 102 (D102) interacts with Mg(2+). Residue N224 participates in Mg(2+) binding. A linker region spans residues 227–247 (VQLAQLERAYQARAAEKLMLE). The segment at 248-454 (GANLRDPARI…GWARPVKKAK (207 aa)) is N-acetyltransferase. Positions 330 and 348 each coordinate UDP-N-acetyl-alpha-D-glucosamine. Residue H360 is the Proton acceptor of the active site. UDP-N-acetyl-alpha-D-glucosamine is bound by residues Y363 and N374. Acetyl-CoA contacts are provided by residues A377, 383–384 (NY), S402, A420, and R437.

In the N-terminal section; belongs to the N-acetylglucosamine-1-phosphate uridyltransferase family. The protein in the C-terminal section; belongs to the transferase hexapeptide repeat family. In terms of assembly, homotrimer. Requires Mg(2+) as cofactor.

The protein resides in the cytoplasm. The enzyme catalyses alpha-D-glucosamine 1-phosphate + acetyl-CoA = N-acetyl-alpha-D-glucosamine 1-phosphate + CoA + H(+). The catalysed reaction is N-acetyl-alpha-D-glucosamine 1-phosphate + UTP + H(+) = UDP-N-acetyl-alpha-D-glucosamine + diphosphate. The protein operates within nucleotide-sugar biosynthesis; UDP-N-acetyl-alpha-D-glucosamine biosynthesis; N-acetyl-alpha-D-glucosamine 1-phosphate from alpha-D-glucosamine 6-phosphate (route II): step 2/2. It participates in nucleotide-sugar biosynthesis; UDP-N-acetyl-alpha-D-glucosamine biosynthesis; UDP-N-acetyl-alpha-D-glucosamine from N-acetyl-alpha-D-glucosamine 1-phosphate: step 1/1. It functions in the pathway bacterial outer membrane biogenesis; LPS lipid A biosynthesis. In terms of biological role, catalyzes the last two sequential reactions in the de novo biosynthetic pathway for UDP-N-acetylglucosamine (UDP-GlcNAc). The C-terminal domain catalyzes the transfer of acetyl group from acetyl coenzyme A to glucosamine-1-phosphate (GlcN-1-P) to produce N-acetylglucosamine-1-phosphate (GlcNAc-1-P), which is converted into UDP-GlcNAc by the transfer of uridine 5-monophosphate (from uridine 5-triphosphate), a reaction catalyzed by the N-terminal domain. The sequence is that of Bifunctional protein GlmU from Shewanella piezotolerans (strain WP3 / JCM 13877).